Here is a 162-residue protein sequence, read N- to C-terminus: UPF0260 protein Caul_3920 (162 aa).

It belongs to the UPF0260 family.

In Caulobacter sp. (strain K31), this protein is UPF0260 protein Caul_3920.